A 359-amino-acid chain; its full sequence is UDP-N-acetylglucosamine--N-acetylmuramyl-(pentapeptide) pyrophosphoryl-undecaprenol N-acetylglucosamine transferase (359 aa).

UDP-N-acetyl-alpha-D-glucosamine is bound by residues Thr12 to Gly14, Asn124, Arg163, Ser191, Ile245, Ala264 to Glu269, and Gln290.

It belongs to the glycosyltransferase 28 family. MurG subfamily.

It is found in the cell inner membrane. It carries out the reaction di-trans,octa-cis-undecaprenyl diphospho-N-acetyl-alpha-D-muramoyl-L-alanyl-D-glutamyl-meso-2,6-diaminopimeloyl-D-alanyl-D-alanine + UDP-N-acetyl-alpha-D-glucosamine = di-trans,octa-cis-undecaprenyl diphospho-[N-acetyl-alpha-D-glucosaminyl-(1-&gt;4)]-N-acetyl-alpha-D-muramoyl-L-alanyl-D-glutamyl-meso-2,6-diaminopimeloyl-D-alanyl-D-alanine + UDP + H(+). It functions in the pathway cell wall biogenesis; peptidoglycan biosynthesis. Its function is as follows. Cell wall formation. Catalyzes the transfer of a GlcNAc subunit on undecaprenyl-pyrophosphoryl-MurNAc-pentapeptide (lipid intermediate I) to form undecaprenyl-pyrophosphoryl-MurNAc-(pentapeptide)GlcNAc (lipid intermediate II). This Nitrosococcus oceani (strain ATCC 19707 / BCRC 17464 / JCM 30415 / NCIMB 11848 / C-107) protein is UDP-N-acetylglucosamine--N-acetylmuramyl-(pentapeptide) pyrophosphoryl-undecaprenol N-acetylglucosamine transferase.